Here is a 142-residue protein sequence, read N- to C-terminus: Large ribosomal subunit protein uL16 (142 aa).

The protein belongs to the universal ribosomal protein uL16 family. In terms of assembly, part of the 50S ribosomal subunit.

Functionally, binds 23S rRNA and is also seen to make contacts with the A and possibly P site tRNAs. In Thermotoga sp. (strain RQ2), this protein is Large ribosomal subunit protein uL16.